The sequence spans 227 residues: Fibrillarin-like rRNA/tRNA 2'-O-methyltransferase (227 aa).

Residues 86–87 (TT), 105–106 (EF), 130–131 (DA), and 150–153 (DVAQ) contribute to the S-adenosyl-L-methionine site.

The protein belongs to the methyltransferase superfamily. Fibrillarin family. Interacts with nop5. Component of box C/D small ribonucleoprotein (sRNP) particles that contain rpl7ae, FlpA and nop5, plus a guide RNA. These sRNP particles form homodimers, giving rise to an asymmetric holoenzyme.

Involved in pre-rRNA and tRNA processing. Utilizes the methyl donor S-adenosyl-L-methionine to catalyze the site-specific 2'-hydroxyl methylation of ribose moieties in rRNA and tRNA. Site specificity is provided by a guide RNA that base pairs with the substrate. Methylation occurs at a characteristic distance from the sequence involved in base pairing with the guide RNA. This is Fibrillarin-like rRNA/tRNA 2'-O-methyltransferase from Pyrococcus furiosus (strain ATCC 43587 / DSM 3638 / JCM 8422 / Vc1).